The primary structure comprises 329 residues: MQFIDQAIIDVKAGSGGDGISAFRREKYVPAGGPAGGDGGQGGNVVLEADDNLQTLLDFKFQKLISAENGQRGGPNKCTGASGKDTVLKVPCGTEVRHLSTNIILGDLTNKGQQLIVAFGGKGGFGNARYLSNSNRAPEKFTEGKVGEEWSLQLELKLLAEVGIIGLPNAGKSTLISVLSSARPKIADYPFTTLIPNLGVVRRPSGDGTVFADIPGLISGASKGIGLGHDFLRHIERTKVLLHLIDSASTDPINDFKTINEELTSYGHGLISRPRIFVLNKKELLNEHEIKKLLNKIEKLTMKKVHIISAVTKFGLDDLLSSIWYELGY.

The Obg domain occupies 1–159; sequence MQFIDQAIID…WSLQLELKLL (159 aa). The 169-residue stretch at 160 to 328 folds into the OBG-type G domain; sequence AEVGIIGLPN…LLSSIWYELG (169 aa). Residues 166–173, 191–195, 213–216, 280–283, and 309–311 contribute to the ATP site; these read GLPNAGKS, FTTLI, DIPG, NKKE, and SAV. Mg(2+) contacts are provided by Ser173 and Thr193.

Belongs to the TRAFAC class OBG-HflX-like GTPase superfamily. OBG GTPase family. Monomer. Mg(2+) serves as cofactor.

The protein resides in the cytoplasm. Functionally, an essential GTPase which binds GTP, GDP and possibly (p)ppGpp with moderate affinity, with high nucleotide exchange rates and a fairly low GTP hydrolysis rate. Plays a role in control of the cell cycle, stress response, ribosome biogenesis and in those bacteria that undergo differentiation, in morphogenesis control. The polypeptide is GTPase Obg (Prochlorococcus marinus (strain NATL1A)).